The sequence spans 286 residues: 4-hydroxybenzoate octaprenyltransferase (286 aa).

8 helical membrane-spanning segments follow: residues 20-40 (IGTFLLLWPCLMALVLAAGGM), 43-63 (LKVLIIFVIGVVVMRACGCII), 95-115 (ILFVVMGLLAFGLVLMLNPLV), 116-136 (VQLSFVGIILTIIYPFTKRFT), 142-162 (FLGVVWSWSIPMAYAAQLGTV), 167-187 (WWLFAANWCWTVAYDTMYAMV), 210-230 (QIIGLFQLAALGCFIMAGLSA), and 235-255 (VFALGILTFIGFGLYQQKLIF).

This sequence belongs to the UbiA prenyltransferase family. Mg(2+) is required as a cofactor.

The protein localises to the cell inner membrane. It carries out the reaction all-trans-octaprenyl diphosphate + 4-hydroxybenzoate = 4-hydroxy-3-(all-trans-octaprenyl)benzoate + diphosphate. It participates in cofactor biosynthesis; ubiquinone biosynthesis. Functionally, catalyzes the prenylation of para-hydroxybenzoate (PHB) with an all-trans polyprenyl group. Mediates the second step in the final reaction sequence of ubiquinone-8 (UQ-8) biosynthesis, which is the condensation of the polyisoprenoid side chain with PHB, generating the first membrane-bound Q intermediate 3-octaprenyl-4-hydroxybenzoate. The polypeptide is 4-hydroxybenzoate octaprenyltransferase (Shewanella loihica (strain ATCC BAA-1088 / PV-4)).